The following is a 412-amino-acid chain: 3,4-dihydroxybenzoate--[aryl-carrier protein] ligase (412 aa).

Belongs to the ATP-dependent AMP-binding enzyme family.

The enzyme catalyses holo-[aryl-carrier protein] + 3,4-dihydroxybenzoate + ATP = 3,4-dihydroxybenzoyl-[aryl-carrier protein] + AMP + diphosphate. It catalyses the reaction 3,4-dihydroxybenzoate + ATP + H(+) = 3,4-dihydroxybenzoyl-5'-AMP + diphosphate. The catalysed reaction is 3,4-dihydroxybenzoyl-5'-AMP + holo-[aryl-carrier protein] = 3,4-dihydroxybenzoyl-[aryl-carrier protein] + AMP + H(+). Its pathway is siderophore biosynthesis; petrobactin biosynthesis. With respect to regulation, ATP-pyrophosphate exchange is inhibited in vitro by nonhydrolyzable acylsulfamate analogs that mimic the AsbC-bound intermediate 3,4-dihydroxybenzoyl-AMP. Involved in the biosynthesis of petrobactin, a catecholate siderophore that functions in both iron acquisition and virulence. Catalyzes the adenylation of 3,4-dihydroxybenzoate (3,4-DHBA) to the corresponding AMP ester, followed by the transfer of the activated unit to the phosphopantetheine thiol of the aryl-carrier protein AsbD. The protein is 3,4-dihydroxybenzoate--[aryl-carrier protein] ligase of Bacillus anthracis.